A 98-amino-acid chain; its full sequence is Citrate lyase acyl carrier protein (98 aa).

Position 14 is an O-(phosphoribosyl dephospho-coenzyme A)serine (Ser-14).

It belongs to the CitD family. Oligomer with a subunit composition of (alpha,beta,gamma)6.

The protein resides in the cytoplasm. Covalent carrier of the coenzyme of citrate lyase. In Shigella boydii serotype 4 (strain Sb227), this protein is Citrate lyase acyl carrier protein.